A 771-amino-acid polypeptide reads, in one-letter code: Receptor like protein 22 (771 aa).

The first 20 residues, 1–20 (MSNLRLRLLSLVSILYCIAA), serve as a signal peptide directing secretion. Topologically, residues 21 to 729 (LRCRPDQTET…EEEEILEWRA (709 aa)) are extracellular. N-linked (GlcNAc...) asparagine glycans are attached at residues Asn-46, Asn-58, Asn-80, Asn-93, Asn-134, and Asn-158. 12 LRR repeats span residues 86 to 110 (LSHL…AFGQ), 112 to 135 (NNLE…IRNL), 136 to 159 (TKLT…VQNL), 160 to 183 (TKLL…FFTM), 185 to 206 (FLSY…SNSS), 207 to 230 (SKLE…VLRL), 232 to 254 (NLRY…IFSP), 255 to 281 (LQSL…DFPK), 283 to 303 (MEIL…LKSL), 304 to 327 (KKLW…IWSL), 329 to 350 (LLVS…LDHV), and 353 to 377 (NSSV…PVSI). N-linked (GlcNAc...) asparagine glycosylation occurs at Asn-204. Asn-242 carries an N-linked (GlcNAc...) asparagine glycan. Asn-292 carries N-linked (GlcNAc...) asparagine glycosylation. 10 N-linked (GlcNAc...) asparagine glycosylation sites follow: Asn-337, Asn-344, Asn-353, Asn-379, Asn-384, Asn-397, Asn-410, Asn-421, Asn-466, and Asn-481. One copy of the LRR 13; degenerate repeat lies at 378-397 (INLSAWNNSFTGDIPLSVCN). LRR repeat units lie at residues 398 to 419 (RTSL…PPCM), 420 to 443 (GNFT…FYSG), 445 to 467 (LTQT…LLNC), 469 to 491 (FIRF…LKAL), 492 to 516 (PNLK…DQSS), 519 to 543 (FPKL…YFAN), 588 to 612 (LTFY…IGLL), 613 to 636 (KTLI…FANV), 637 to 660 (TELE…LGRL), and 662 to 685 (YLAY…QIIG). Asn-543 carries an N-linked (GlcNAc...) asparagine glycan. Residues Asn-619, Asn-622, and Asn-635 are each glycosylated (N-linked (GlcNAc...) asparagine). A helical membrane pass occupies residues 730 to 750 (AAIGYGPGVLFGLAIGHVVAL). Residues 751 to 771 (YKPGWFIKNNGQNRLRGIRHP) are Cytoplasmic-facing.

It belongs to the RLP family.

The protein localises to the cell membrane. In Arabidopsis thaliana (Mouse-ear cress), this protein is Receptor like protein 22.